A 1045-amino-acid polypeptide reads, in one-letter code: DNA polymerase (1045 aa).

Residues 331-355 (IKENEESDSESDNDDEEDKKENDGA) are disordered. Positions 335 to 348 (EESDSESDNDDEED) are enriched in acidic residues.

It belongs to the DNA polymerase type-B family.

It carries out the reaction DNA(n) + a 2'-deoxyribonucleoside 5'-triphosphate = DNA(n+1) + diphosphate. This chain is DNA polymerase (dpo), found in Phaeocystis pouchetii (PpV01).